The primary structure comprises 554 residues: Formate--tetrahydrofolate ligase (554 aa).

Residue 67-74 (TPTGEGKT) participates in ATP binding.

It belongs to the formate--tetrahydrofolate ligase family.

It carries out the reaction (6S)-5,6,7,8-tetrahydrofolate + formate + ATP = (6R)-10-formyltetrahydrofolate + ADP + phosphate. The protein operates within one-carbon metabolism; tetrahydrofolate interconversion. The protein is Formate--tetrahydrofolate ligase of Finegoldia magna (strain ATCC 29328 / DSM 20472 / WAL 2508) (Peptostreptococcus magnus).